A 164-amino-acid chain; its full sequence is Seripauperin-21 (164 aa).

Belongs to the SRP1/TIP1 family. Seripauperin subfamily.

This is Seripauperin-21 (PAU21) from Saccharomyces cerevisiae (strain ATCC 204508 / S288c) (Baker's yeast).